We begin with the raw amino-acid sequence, 157 residues long: MTAIRLYVDADACPVKDEIYRVAERHGVSVSVVAGGYIRVPDHPLIERIAAGPGMDAADDWIAERAGKTDIVITADIPLASRCVKAGASVIAPNGKPFTEQSIGMTLAVRNLMTDLRASGEMTGGPRSFQPRDRSAFLSALDQAIRRIRRACAARQG.

This sequence belongs to the UPF0178 family.

This chain is UPF0178 protein Nwi_2152, found in Nitrobacter winogradskyi (strain ATCC 25391 / DSM 10237 / CIP 104748 / NCIMB 11846 / Nb-255).